The sequence spans 408 residues: MSAPKKVVLAYSGGLDTSIILKWLQTEYGCEVVTFTADLGQGEELEPAREKAVMLGIKPENIFIEDVREEFVRDFVFPMFRANALYEGLYLLGTSIARPLIAKRLVEIAAQTGADAVAHGATGKGNDQVRFELTAYALDPAIKVIAPWREWDLTSRTKLLEFAEQNQIPIAKNKRGEAPFSVDANLLHTSSEGRVLENPGEEAPDYVYQRTVDPEKAPDAPEFVEIAFEKGDAVAINGEAMSPATILTKLNELGGKHGVGRLDLVENRFVGMKSRGIYETPGGTILLEAHRGIEQITLDSGAGHLKDSIMPRYAELIYNGFWYSPEREMLQALIDKSQEHVTGTVRVKLYKGFARTVARWSEHSLYSEKHVTFEEDAGAYDQKDAAGFIRLNALRLKLIATRNARVKG.

ATP contacts are provided by residues 10-18 (AYSGGLDTS) and Ala37. L-citrulline is bound by residues Tyr90 and Ser95. Gly120 is an ATP binding site. Positions 122, 126, and 127 each coordinate L-aspartate. Asn126 is an L-citrulline binding site. Positions 130, 181, 190, 266, and 278 each coordinate L-citrulline.

The protein belongs to the argininosuccinate synthase family. Type 1 subfamily. In terms of assembly, homotetramer.

It localises to the cytoplasm. The catalysed reaction is L-citrulline + L-aspartate + ATP = 2-(N(omega)-L-arginino)succinate + AMP + diphosphate + H(+). Its pathway is amino-acid biosynthesis; L-arginine biosynthesis; L-arginine from L-ornithine and carbamoyl phosphate: step 2/3. In Cereibacter sphaeroides (strain ATCC 17029 / ATH 2.4.9) (Rhodobacter sphaeroides), this protein is Argininosuccinate synthase.